A 658-amino-acid polypeptide reads, in one-letter code: Threonine--tRNA ligase (658 aa).

A TGS domain is found at 1–61 (MSDVRVIIQR…KDGETVEAVE (61 aa)). Residues 259 to 554 (DHRKLGSELD…LLEHYAGAMP (296 aa)) are catalytic. The Zn(2+) site is built by Cys-353, His-404, and His-531.

This sequence belongs to the class-II aminoacyl-tRNA synthetase family. As to quaternary structure, homodimer. Requires Zn(2+) as cofactor.

The protein localises to the cytoplasm. It carries out the reaction tRNA(Thr) + L-threonine + ATP = L-threonyl-tRNA(Thr) + AMP + diphosphate + H(+). Catalyzes the attachment of threonine to tRNA(Thr) in a two-step reaction: L-threonine is first activated by ATP to form Thr-AMP and then transferred to the acceptor end of tRNA(Thr). Also edits incorrectly charged L-seryl-tRNA(Thr). This Streptomyces coelicolor (strain ATCC BAA-471 / A3(2) / M145) protein is Threonine--tRNA ligase.